Consider the following 281-residue polypeptide: 2-dehydro-3-deoxyphosphooctonate aldolase (281 aa).

This sequence belongs to the KdsA family.

It localises to the cytoplasm. It catalyses the reaction D-arabinose 5-phosphate + phosphoenolpyruvate + H2O = 3-deoxy-alpha-D-manno-2-octulosonate-8-phosphate + phosphate. It participates in carbohydrate biosynthesis; 3-deoxy-D-manno-octulosonate biosynthesis; 3-deoxy-D-manno-octulosonate from D-ribulose 5-phosphate: step 2/3. The protein operates within bacterial outer membrane biogenesis; lipopolysaccharide biosynthesis. This chain is 2-dehydro-3-deoxyphosphooctonate aldolase, found in Hahella chejuensis (strain KCTC 2396).